The primary structure comprises 192 residues: Imidazole glycerol phosphate synthase subunit HisH (192 aa).

Positions 1–192 (MIVIVDYGLG…QAIQGGFIND (192 aa)) constitute a Glutamine amidotransferase type-1 domain. The Nucleophile role is filled by cysteine 77. Residues histidine 169 and glutamate 171 contribute to the active site.

As to quaternary structure, heterodimer of HisH and HisF.

The protein localises to the cytoplasm. The catalysed reaction is 5-[(5-phospho-1-deoxy-D-ribulos-1-ylimino)methylamino]-1-(5-phospho-beta-D-ribosyl)imidazole-4-carboxamide + L-glutamine = D-erythro-1-(imidazol-4-yl)glycerol 3-phosphate + 5-amino-1-(5-phospho-beta-D-ribosyl)imidazole-4-carboxamide + L-glutamate + H(+). It carries out the reaction L-glutamine + H2O = L-glutamate + NH4(+). Its pathway is amino-acid biosynthesis; L-histidine biosynthesis; L-histidine from 5-phospho-alpha-D-ribose 1-diphosphate: step 5/9. IGPS catalyzes the conversion of PRFAR and glutamine to IGP, AICAR and glutamate. The HisH subunit catalyzes the hydrolysis of glutamine to glutamate and ammonia as part of the synthesis of IGP and AICAR. The resulting ammonia molecule is channeled to the active site of HisF. This is Imidazole glycerol phosphate synthase subunit HisH from Staphylococcus aureus (strain bovine RF122 / ET3-1).